The primary structure comprises 447 residues: Ribosomal protein uS12 methylthiotransferase RimO (447 aa).

Residues 4 to 114 (PKVGFVSLGC…VMEAVHEYVP (111 aa)) form the MTTase N-terminal domain. 6 residues coordinate [4Fe-4S] cluster: Cys-13, Cys-49, Cys-78, Cys-147, Cys-151, and Cys-154. A Radical SAM core domain is found at 133–370 (LTPKHYAYLK…MQVQQQISAA (238 aa)). The TRAM domain occupies 373-443 (QKRIGQTMTV…EYDLFAKLIK (71 aa)).

The protein belongs to the methylthiotransferase family. RimO subfamily. Requires [4Fe-4S] cluster as cofactor.

The protein localises to the cytoplasm. The catalysed reaction is L-aspartate(89)-[ribosomal protein uS12]-hydrogen + (sulfur carrier)-SH + AH2 + 2 S-adenosyl-L-methionine = 3-methylsulfanyl-L-aspartate(89)-[ribosomal protein uS12]-hydrogen + (sulfur carrier)-H + 5'-deoxyadenosine + L-methionine + A + S-adenosyl-L-homocysteine + 2 H(+). In terms of biological role, catalyzes the methylthiolation of an aspartic acid residue of ribosomal protein uS12. The chain is Ribosomal protein uS12 methylthiotransferase RimO from Acinetobacter baumannii (strain AB307-0294).